Here is a 91-residue protein sequence, read N- to C-terminus: MANTKSAEKRHRQSLKRRARNVTVRGEVKTAVKSAREALGSKDGAKMTDAIKSAAKALSKAATKGVLHKRTASRRISRLAKAATKAARAQA.

The segment at 1 to 25 (MANTKSAEKRHRQSLKRRARNVTVR) is disordered. The segment covering 8 to 20 (EKRHRQSLKRRAR) has biased composition (basic residues).

The protein belongs to the bacterial ribosomal protein bS20 family.

Functionally, binds directly to 16S ribosomal RNA. This chain is Small ribosomal subunit protein bS20, found in Myxococcus xanthus (strain DK1622).